Consider the following 106-residue polypeptide: Gibberellin-regulated protein 12 (106 aa).

A signal peptide spans 1–22 (MMKLIVVFVISSLLFATQFSNG).

The protein belongs to the GASA family. Post-translationally, six disulfide bonds may be present.

The protein localises to the secreted. Gibberellin-regulated protein that may function in hormonal controlled steps of development such as seed germination, flowering and seed maturation. The protein is Gibberellin-regulated protein 12 (GASA12) of Arabidopsis thaliana (Mouse-ear cress).